The following is a 175-amino-acid chain: GTP-dependent dephospho-CoA kinase (175 aa).

Positions 48, 49, 50, 66, and 124 each coordinate GTP.

The protein belongs to the GTP-dependent DPCK family.

It carries out the reaction 3'-dephospho-CoA + GTP = GDP + CoA + H(+). It functions in the pathway cofactor biosynthesis; coenzyme A biosynthesis. Its function is as follows. Catalyzes the GTP-dependent phosphorylation of the 3'-hydroxyl group of dephosphocoenzyme A to form coenzyme A (CoA). The sequence is that of GTP-dependent dephospho-CoA kinase from Thermofilum pendens (strain DSM 2475 / Hrk 5).